The sequence spans 242 residues: Uridylate kinase (242 aa).

17–20 (KLGG) contacts ATP. Residue Gly-58 participates in UMP binding. ATP is bound by residues Gly-59 and Arg-63. UMP contacts are provided by residues Asp-78 and 139–146 (MGMPYFST). The ATP site is built by Phe-172 and Asp-175.

The protein belongs to the UMP kinase family. In terms of assembly, homohexamer.

The protein resides in the cytoplasm. It carries out the reaction UMP + ATP = UDP + ADP. It participates in pyrimidine metabolism; CTP biosynthesis via de novo pathway; UDP from UMP (UMPK route): step 1/1. Its activity is regulated as follows. Inhibited by UTP. Functionally, catalyzes the reversible phosphorylation of UMP to UDP. The chain is Uridylate kinase from Rhodococcus jostii (strain RHA1).